The sequence spans 30 residues: Neurotoxin II.22.5 (30 aa).

Residues 1–30 form the LCN-type CS-alpha/beta domain; that stretch reads KEGYIVNYHTGCKYTCAKLGDNDYCLRECK.

This sequence belongs to the long (4 C-C) scorpion toxin superfamily. Sodium channel inhibitor family. Beta subfamily. As to expression, expressed by the venom gland.

The protein localises to the secreted. Functionally, binds to sodium channels (Nav) and inhibits the inactivation of the activated channels, thereby blocking neuronal transmission. This chain is Neurotoxin II.22.5, found in Centruroides tecomanus (Scorpion).